The sequence spans 166 residues: Small ribosomal subunit protein uS5 (166 aa).

An S5 DRBM domain is found at 12-75 (YIEKLVQVNR…EAARRNMIQV (64 aa)).

This sequence belongs to the universal ribosomal protein uS5 family. In terms of assembly, part of the 30S ribosomal subunit. Contacts proteins S4 and S8.

With S4 and S12 plays an important role in translational accuracy. Functionally, located at the back of the 30S subunit body where it stabilizes the conformation of the head with respect to the body. This chain is Small ribosomal subunit protein uS5, found in Azotobacter vinelandii (strain DJ / ATCC BAA-1303).